Here is a 490-residue protein sequence, read N- to C-terminus: MTNFEVRQYDAAGRLGELTVPRAGVTVETPTILPVVNPHVQTVAPATLASEFGAEILITNSYILHGSDDLREPVLEQGLHDLLGFDGAIMTDSGSFQLAEYGDIDVTTEEILEFQHEIGSDIGTPVDIPTPPDVDRERATEELKTTQERLEHAATVDTGEMLVSAPVQGATYPDLRERAAADAVSTGLDVFPLGAVVPLMNEYRYADLADVVAACKRGLGEVGPVHLFGAGHPMMFAMAAALGCDLFDSAAYALYARDDRYLTVQGTELLDELSYFPCHCPVCTDHTPAELDAMDADAREELLARHNLHVTYGEIRTVKQAIRSGNLMELVDSRARGHPEMLDGYRALLDHSEQLERTDPVSKDAFFYTSTESARRPEVRRHQDRLERLPVEGEEVLLTEGSSSAQYDESWGVLPPFGPYPRELADTYPLTAETPDRTDRAAYEAAATGVRRLVELHPDVSFTLVHDDWPATALDRVPEGVRLRDLHARD.

Aspartate 92 (nucleophile) is an active-site residue. Substrate contacts are provided by aspartate 127 and alanine 195. Positions 278, 280, and 283 each coordinate Zn(2+).

It belongs to the archaeosine tRNA-ribosyltransferase family. Zn(2+) is required as a cofactor.

The catalysed reaction is guanosine(15) in tRNA + 7-cyano-7-deazaguanine = 7-cyano-7-carbaguanosine(15) in tRNA + guanine. Its pathway is tRNA modification; archaeosine-tRNA biosynthesis. Its function is as follows. Exchanges the guanine residue with 7-cyano-7-deazaguanine (preQ0) at position 15 in the dihydrouridine loop (D-loop) of archaeal tRNAs. This Haloarcula marismortui (strain ATCC 43049 / DSM 3752 / JCM 8966 / VKM B-1809) (Halobacterium marismortui) protein is tRNA-guanine(15) transglycosylase.